We begin with the raw amino-acid sequence, 462 residues long: A-type ATP synthase subunit B (462 aa).

Belongs to the ATPase alpha/beta chains family. In terms of assembly, has multiple subunits with at least A(3), B(3), C, D, E, F, H, I and proteolipid K(x).

It is found in the cell membrane. In terms of biological role, component of the A-type ATP synthase that produces ATP from ADP in the presence of a proton gradient across the membrane. The B chain is a regulatory subunit. This is A-type ATP synthase subunit B from Cenarchaeum symbiosum (strain A).